Consider the following 325-residue polypeptide: L-lactate dehydrogenase (325 aa).

NAD(+) is bound by residues Val21, Asp42, Lys47, Tyr73, and 87-88; that span reads GA. Substrate contacts are provided by residues Gln90, Arg96, and 128-131; that span reads NPVD. NAD(+)-binding positions include 126 to 128 and Ser151; that span reads ATN. 156–159 is a binding site for substrate; the sequence is DTAR. Positions 161 and 176 each coordinate beta-D-fructose 1,6-bisphosphate. The active-site Proton acceptor is His183. Tyr228 is modified (phosphotyrosine). Thr237 contacts substrate.

This sequence belongs to the LDH/MDH superfamily. LDH family. In terms of assembly, homotetramer.

It is found in the cytoplasm. It carries out the reaction (S)-lactate + NAD(+) = pyruvate + NADH + H(+). The protein operates within fermentation; pyruvate fermentation to lactate; (S)-lactate from pyruvate: step 1/1. Its activity is regulated as follows. Allosterically activated by fructose 1,6-bisphosphate (FBP). Its function is as follows. Catalyzes the conversion of lactate to pyruvate. The protein is L-lactate dehydrogenase of Shouchella clausii (strain KSM-K16) (Alkalihalobacillus clausii).